Reading from the N-terminus, the 278-residue chain is Small ribosomal subunit protein uS3 (278 aa).

One can recognise a KH type-2 domain in the interval 39–107 (VRDFLKKRLA…PVHVNIEEVR (69 aa)). Positions 217–278 (VENENEARRG…DAAAVEKEVS (62 aa)) are disordered. Residues 230-239 (PRNDAGDNRG) show a composition bias toward basic and acidic residues.

It belongs to the universal ribosomal protein uS3 family. In terms of assembly, part of the 30S ribosomal subunit. Forms a tight complex with proteins S10 and S14.

Binds the lower part of the 30S subunit head. Binds mRNA in the 70S ribosome, positioning it for translation. This Aromatoleum aromaticum (strain DSM 19018 / LMG 30748 / EbN1) (Azoarcus sp. (strain EbN1)) protein is Small ribosomal subunit protein uS3.